A 408-amino-acid polypeptide reads, in one-letter code: Putative glutamate--cysteine ligase 2 (408 aa).

Belongs to the glutamate--cysteine ligase type 2 family. YbdK subfamily.

The catalysed reaction is L-cysteine + L-glutamate + ATP = gamma-L-glutamyl-L-cysteine + ADP + phosphate + H(+). In terms of biological role, ATP-dependent carboxylate-amine ligase which exhibits weak glutamate--cysteine ligase activity. In Bradyrhizobium sp. (strain BTAi1 / ATCC BAA-1182), this protein is Putative glutamate--cysteine ligase 2.